Consider the following 320-residue polypeptide: Glycerol-3-phosphate dehydrogenase [NAD(P)+] (320 aa).

NADPH contacts are provided by F11, R30, and K102. Sn-glycerol 3-phosphate is bound by residues K102, G130, and S132. A134 contacts NADPH. Sn-glycerol 3-phosphate-binding residues include K185, D238, S248, R249, and N250. K185 (proton acceptor) is an active-site residue. Position 249 (R249) interacts with NADPH. Residue E270 coordinates NADPH.

The protein belongs to the NAD-dependent glycerol-3-phosphate dehydrogenase family.

The protein resides in the cytoplasm. The enzyme catalyses sn-glycerol 3-phosphate + NAD(+) = dihydroxyacetone phosphate + NADH + H(+). The catalysed reaction is sn-glycerol 3-phosphate + NADP(+) = dihydroxyacetone phosphate + NADPH + H(+). Its pathway is membrane lipid metabolism; glycerophospholipid metabolism. Catalyzes the reduction of the glycolytic intermediate dihydroxyacetone phosphate (DHAP) to sn-glycerol 3-phosphate (G3P), the key precursor for phospholipid synthesis. The polypeptide is Glycerol-3-phosphate dehydrogenase [NAD(P)+] (Ruegeria sp. (strain TM1040) (Silicibacter sp.)).